The following is a 274-amino-acid chain: Thiazole synthase (274 aa).

Lys111 serves as the catalytic Schiff-base intermediate with DXP. 1-deoxy-D-xylulose 5-phosphate contacts are provided by residues Gly172, 198 to 199 (AG), and 220 to 221 (NT).

The protein belongs to the ThiG family. In terms of assembly, homotetramer. Forms heterodimers with either ThiH or ThiS.

It is found in the cytoplasm. The enzyme catalyses [ThiS sulfur-carrier protein]-C-terminal-Gly-aminoethanethioate + 2-iminoacetate + 1-deoxy-D-xylulose 5-phosphate = [ThiS sulfur-carrier protein]-C-terminal Gly-Gly + 2-[(2R,5Z)-2-carboxy-4-methylthiazol-5(2H)-ylidene]ethyl phosphate + 2 H2O + H(+). Its pathway is cofactor biosynthesis; thiamine diphosphate biosynthesis. Functionally, catalyzes the rearrangement of 1-deoxy-D-xylulose 5-phosphate (DXP) to produce the thiazole phosphate moiety of thiamine. Sulfur is provided by the thiocarboxylate moiety of the carrier protein ThiS. In vitro, sulfur can be provided by H(2)S. This Gloeobacter violaceus (strain ATCC 29082 / PCC 7421) protein is Thiazole synthase.